A 371-amino-acid chain; its full sequence is Repetitive proline-rich cell wall protein 2 (371 aa).

Residues 1–22 (MASSNLLVLLLFALFAIPRGLA) form the signal peptide. A run of 66 repeats spans residues 32–36 (PPVYK), 37–41 (PPVEK), 42–46 (PPVYK), 47–51 (PPVEK), 52–56 (PPVYK), 57–61 (PPVEK), 62–66 (PPVYK), 67–71 (PPVEK), 72–76 (PPVYK), 77–81 (PPVEK), 82–86 (PPVYK), 87–91 (PPVEK), 92–96 (PPVYK), 97–101 (PPVEK), 102–106 (PPVYK), 107–111 (PPVEK), 112–116 (PPVYK), 117–121 (PPVEK), 122–126 (PPVYK), 127–131 (PPVEK), 132–136 (PPVYK), 137–141 (PPVEK), 142–146 (PPVYK), 147–151 (PPVEK), 152–156 (PPVYK), 157–161 (PPVEK), 162–166 (PPVYK), 167–171 (PPVEK), 172–176 (PPVYK), 177–181 (PPVEK), 182–186 (PPVYK), 187–191 (PPVEK), 192–196 (PPVYK), 197–201 (PPVEK), 202–206 (PPVYK), 207–211 (PPVEK), 212–216 (PPVYK), 217–221 (PPVEK), 222–226 (PPVYK), 227–231 (PPVEK), 232–236 (PPIYK), 237–241 (PPVEK), 242–246 (PPVYK), 247–251 (PPVEK), 252–256 (PPVYK), 257–261 (PPVEK), 262–266 (PPIYK), 267–271 (PPVEK), 272–276 (PPVYK), 277–281 (PPVEK), 282–286 (PPVYK), 287–291 (PPVEK), 292–296 (PPVYK), 297–301 (PPVEK), 302–306 (PPVYK), 307–311 (PPVEK), 312–316 (PPVYK), 317–321 (PPVYK), 322–326 (PPVYK), 327–331 (PPVEK), 332–336 (PPVYK), 337–341 (PPVYK), 342–346 (PPVEK), 347–351 (PPVYK), 352–356 (PPVYK), and 357–361 (PPVEK). The tract at residues 32–366 (PPVYKPPVEK…PPVEKPPVYG (335 aa)) is 67 X 5 AA approximate tandem repeats of P-P-[IV]-[EY]-K. The disordered stretch occupies residues 49-317 (VEKPPVYKPP…PVEKPPVYKP (269 aa)). The disordered stretch occupies residues 339–371 (VYKPPVEKPPVYKPPVYKPPVEKPPVYGPPHHP). A 67; approximate repeat occupies 362-366 (PPVYG).

It belongs to the plant proline-rich protein superfamily. ENOD12 family. As to expression, expressed in hypocotyls, roots and mature root nodules.

The protein localises to the secreted. It localises to the cell wall. In terms of biological role, this is a developmentally regulated putative cell wall protein. The polypeptide is Repetitive proline-rich cell wall protein 2 (PRP2) (Medicago truncatula (Barrel medic)).